A 392-amino-acid polypeptide reads, in one-letter code: p21-activated protein kinase-interacting protein 1 (392 aa).

5 WD repeats span residues 40–77 (AHTASLSAVAVNSRFVVTGSKDETIHIYDMKKKVDHGA), 80–118 (HHNGTITCLKFHGNRHLISGAEDGLICVWDARRWECLKS), 121–160 (AHKGHVTFLSIHPSGRLALSVGTDKTLRTWNLVEGRSAFI), 202–240 (TNERRVSSVTFLSESVLTVAGDEEVVRFFDCDSLTCLSE), and 243–284 (AHEN…KVSP). Residues 309-392 (TKESPPAAAE…RKKKKIRMMQ (84 aa)) form a disordered region. The span at 325–351 (EQSRRNKEESGHAVQEEEKQPKPDTEK) shows a compositional bias: basic and acidic residues. Residues 355-368 (TGDSNKPTRGNSLV) are compositionally biased toward polar residues. Residues 381 to 392 (KKRKKKKIRMMQ) are compositionally biased toward basic residues.

As to quaternary structure, interacts with PAK1.

The protein localises to the nucleus. It is found in the nucleolus. Negatively regulates the PAK1 kinase. PAK1 is a member of the PAK kinase family, which has been shown to play a positive role in the regulation of signaling pathways involving MAPK8 and RELA. PAK1 exists as an inactive homodimer, which is activated by binding of small GTPases such as CDC42 to an N-terminal regulatory domain. PAK1IP1 also binds to the N-terminus of PAK1, and inhibits the specific activation of PAK1 by CDC42. May be involved in ribosomal large subunit assembly. In Bos taurus (Bovine), this protein is p21-activated protein kinase-interacting protein 1 (PAK1IP1).